We begin with the raw amino-acid sequence, 182 residues long: ATP synthase subunit b, chloroplastic (182 aa).

A helical membrane pass occupies residues 36-56 (ILLLLLGLMYVLKEFLGSILV).

This sequence belongs to the ATPase B chain family. F-type ATPases have 2 components, F(1) - the catalytic core - and F(0) - the membrane proton channel. F(1) has five subunits: alpha(3), beta(3), gamma(1), delta(1), epsilon(1). F(0) has four main subunits: a(1), b(1), b'(1) and c(10-14). The alpha and beta chains form an alternating ring which encloses part of the gamma chain. F(1) is attached to F(0) by a central stalk formed by the gamma and epsilon chains, while a peripheral stalk is formed by the delta, b and b' chains.

It is found in the plastid. The protein resides in the chloroplast thylakoid membrane. Functionally, f(1)F(0) ATP synthase produces ATP from ADP in the presence of a proton or sodium gradient. F-type ATPases consist of two structural domains, F(1) containing the extramembraneous catalytic core and F(0) containing the membrane proton channel, linked together by a central stalk and a peripheral stalk. During catalysis, ATP synthesis in the catalytic domain of F(1) is coupled via a rotary mechanism of the central stalk subunits to proton translocation. Component of the F(0) channel, it forms part of the peripheral stalk, linking F(1) to F(0). In Gracilaria tenuistipitata var. liui (Red alga), this protein is ATP synthase subunit b, chloroplastic.